Here is a 410-residue protein sequence, read N- to C-terminus: 3-phosphoshikimate 1-carboxyvinyltransferase (410 aa).

3-phosphoshikimate contacts are provided by Lys-20, Ser-21, and Arg-25. Lys-20 is a phosphoenolpyruvate binding site. Arg-115 lines the phosphoenolpyruvate pocket. 3-phosphoshikimate contacts are provided by Ser-157, Ser-158, Gln-159, Ser-183, Asp-293, and Lys-320. Gln-159 contacts phosphoenolpyruvate. Asp-293 (proton acceptor) is an active-site residue. Arg-324, Arg-365, and Lys-391 together coordinate phosphoenolpyruvate.

It belongs to the EPSP synthase family. As to quaternary structure, monomer.

Its subcellular location is the cytoplasm. It carries out the reaction 3-phosphoshikimate + phosphoenolpyruvate = 5-O-(1-carboxyvinyl)-3-phosphoshikimate + phosphate. The protein operates within metabolic intermediate biosynthesis; chorismate biosynthesis. Functionally, catalyzes the transfer of the enolpyruvyl moiety of phosphoenolpyruvate (PEP) to the 5-hydroxyl of shikimate-3-phosphate (S3P) to produce enolpyruvyl shikimate-3-phosphate and inorganic phosphate. The polypeptide is 3-phosphoshikimate 1-carboxyvinyltransferase (Thermoplasma acidophilum (strain ATCC 25905 / DSM 1728 / JCM 9062 / NBRC 15155 / AMRC-C165)).